A 316-amino-acid polypeptide reads, in one-letter code: Bifunctional peptidase and (3S)-lysyl hydroxylase Jmjd7 (316 aa).

In terms of domain architecture, JmjC spans 128-307; it reads VQKQCSNLPT…LKYSYFQLMD (180 aa). Positions 178, 180, and 277 each coordinate Fe cation.

Homodimer; disulfide-linked. Interacts with DRG1 and DRG2. Fe(2+) serves as cofactor.

It is found in the nucleus. The protein resides in the cytoplasm. The catalysed reaction is L-lysyl-[protein] + 2-oxoglutarate + O2 = (3S)-3-hydroxy-L-lysyl-[protein] + succinate + CO2. Its function is as follows. Bifunctional enzyme that acts both as an endopeptidase and 2-oxoglutarate-dependent monooxygenase. Endopeptidase that cleaves histones N-terminal tails at the carboxyl side of methylated arginine or lysine residues, to generate 'tailless nucleosomes', which may trigger transcription elongation. Preferentially recognizes and cleaves monomethylated and dimethylated arginine residues of histones H2, H3 and H4. After initial cleavage, continues to digest histones tails via its aminopeptidase activity. Additionally, may play a role in protein biosynthesis by modifying the translation machinery. Acts as a Fe(2+) and 2-oxoglutarate-dependent monooxygenase, catalyzing (S)-stereospecific hydroxylation at C-3 of 'Lys-22' of DRG1 and 'Lys-21' of DRG2 translation factors (TRAFAC), promoting their interaction with ribonucleic acids (RNA). In Mus musculus (Mouse), this protein is Bifunctional peptidase and (3S)-lysyl hydroxylase Jmjd7.